The sequence spans 452 residues: Poly(A) polymerase I (452 aa).

Catalysis depends on residues aspartate 68, aspartate 70, and aspartate 150. Residues 427 to 452 (EQQRLHPKPKKKYYRPRRRKTTCSAE) form a disordered region. The segment covering 431-452 (LHPKPKKKYYRPRRRKTTCSAE) has biased composition (basic residues).

This sequence belongs to the tRNA nucleotidyltransferase/poly(A) polymerase family.

The catalysed reaction is RNA(n) + ATP = RNA(n)-3'-adenine ribonucleotide + diphosphate. Adds poly(A) tail to the 3' end of many RNAs, which usually targets these RNAs for decay. Plays a significant role in the global control of gene expression, through influencing the rate of transcript degradation, and in the general RNA quality control. The protein is Poly(A) polymerase I of Haemophilus influenzae (strain ATCC 51907 / DSM 11121 / KW20 / Rd).